The following is a 554-amino-acid chain: Intraflagellar transport protein 56 (554 aa).

The disordered stretch occupies residues 1–27; it reads MMLSRAKPAVGGESPHTDKRKKKGRKI. Residues 18 to 27 are compositionally biased toward basic residues; that stretch reads DKRKKKGRKI. TPR repeat units follow at residues 57–90, 92–125, 151–184, and 468–501; these read DDTN…ENCN, EVWV…LQNR, KEDQ…NREY, and ANDC…EGKR.

The protein belongs to the IFT56 family. As to quaternary structure, component of the IFT complex B. Interacts with IFT46; the interaction is direct. As to expression, high expression detected in testis. Detected also retina, kidney, lung and brain tissue. The expression level is low in spleen. Expressed in the developing liver. Present in the airway epithelial cells and the testes (at protein level).

It localises to the cell projection. Its subcellular location is the cilium. Component of the intraflagellar transport (IFT) complex B required for transport of proteins in the motile cilium. Required for transport of specific ciliary cargo proteins related to motility, while it is neither required for IFT complex B assembly or motion nor for cilium assembly. Required for efficient coupling between the accumulation of GLI2 and GLI3 at the ciliary tips and their dissociation from the negative regulator SUFU. Plays a key role in maintaining the integrity of the IFT complex B and the proper ciliary localization of the IFT complex B components. Not required for IFT complex A ciliary localization or function. Essential for maintaining proper microtubule organization within the ciliary axoneme. The sequence is that of Intraflagellar transport protein 56 from Mus musculus (Mouse).